The following is a 301-amino-acid chain: Homoserine O-acetyltransferase (301 aa).

Cysteine 142 (acyl-thioester intermediate) is an active-site residue. Substrate contacts are provided by lysine 163 and serine 192. Histidine 235 serves as the catalytic Proton acceptor. Glutamate 237 is a catalytic residue. Position 249 (arginine 249) interacts with substrate.

This sequence belongs to the MetA family.

The protein localises to the cytoplasm. The enzyme catalyses L-homoserine + acetyl-CoA = O-acetyl-L-homoserine + CoA. The protein operates within amino-acid biosynthesis; L-methionine biosynthesis via de novo pathway; O-acetyl-L-homoserine from L-homoserine: step 1/1. Functionally, transfers an acetyl group from acetyl-CoA to L-homoserine, forming acetyl-L-homoserine. This is Homoserine O-acetyltransferase from Bacillus cereus (strain ZK / E33L).